We begin with the raw amino-acid sequence, 321 residues long: Phospho-N-acetylmuramoyl-pentapeptide-transferase (321 aa).

10 consecutive transmembrane segments (helical) span residues 1 to 21 (MIYV…PILI), 49 to 69 (TMGG…AIIF), 77 to 97 (ILLL…DYII), 112 to 132 (FLAQ…FNMI), 140 to 160 (IPFT…IVFW), 176 to 196 (GLAT…SFML), 200 to 220 (AVGT…IYNV), 225 to 245 (VFMG…VSIM), 250 to 270 (ISLI…ILQV), and 300 to 320 (VVSV…WIGV).

Belongs to the glycosyltransferase 4 family. MraY subfamily. Mg(2+) serves as cofactor.

It is found in the cell membrane. It carries out the reaction UDP-N-acetyl-alpha-D-muramoyl-L-alanyl-gamma-D-glutamyl-L-lysyl-D-alanyl-D-alanine + di-trans,octa-cis-undecaprenyl phosphate = Mur2Ac(oyl-L-Ala-gamma-D-Glu-L-Lys-D-Ala-D-Ala)-di-trans,octa-cis-undecaprenyl diphosphate + UMP. The protein operates within cell wall biogenesis; peptidoglycan biosynthesis. Functionally, catalyzes the initial step of the lipid cycle reactions in the biosynthesis of the cell wall peptidoglycan: transfers peptidoglycan precursor phospho-MurNAc-pentapeptide from UDP-MurNAc-pentapeptide onto the lipid carrier undecaprenyl phosphate, yielding undecaprenyl-pyrophosphoryl-MurNAc-pentapeptide, known as lipid I. This Staphylococcus carnosus (strain TM300) protein is Phospho-N-acetylmuramoyl-pentapeptide-transferase.